The sequence spans 88 residues: Small ribosomal subunit protein uS15 (88 aa).

It belongs to the universal ribosomal protein uS15 family. Part of the 30S ribosomal subunit. Forms a bridge to the 50S subunit in the 70S ribosome, contacting the 23S rRNA.

In terms of biological role, one of the primary rRNA binding proteins, it binds directly to 16S rRNA where it helps nucleate assembly of the platform of the 30S subunit by binding and bridging several RNA helices of the 16S rRNA. Its function is as follows. Forms an intersubunit bridge (bridge B4) with the 23S rRNA of the 50S subunit in the ribosome. The protein is Small ribosomal subunit protein uS15 of Albidiferax ferrireducens (strain ATCC BAA-621 / DSM 15236 / T118) (Rhodoferax ferrireducens).